A 294-amino-acid polypeptide reads, in one-letter code: tRNA dimethylallyltransferase (294 aa).

10–17 is an ATP binding site; that stretch reads GPTAVGKT. 12 to 17 contributes to the substrate binding site; sequence TAVGKT. The interval 35–38 is interaction with substrate tRNA; the sequence is DSQQ.

Belongs to the IPP transferase family. As to quaternary structure, monomer. Mg(2+) serves as cofactor.

The catalysed reaction is adenosine(37) in tRNA + dimethylallyl diphosphate = N(6)-dimethylallyladenosine(37) in tRNA + diphosphate. Catalyzes the transfer of a dimethylallyl group onto the adenine at position 37 in tRNAs that read codons beginning with uridine, leading to the formation of N6-(dimethylallyl)adenosine (i(6)A). In Streptococcus pneumoniae serotype 2 (strain D39 / NCTC 7466), this protein is tRNA dimethylallyltransferase.